Here is a 645-residue protein sequence, read N- to C-terminus: Aminopeptidase P1 (645 aa).

N-acetylserine is present on S2. R69 and H420 together coordinate a peptide. D440, D451, and H514 together coordinate Mn(2+). Positions 514, 523, and 549 each coordinate a peptide. E549 and E563 together coordinate Mn(2+).

The protein belongs to the peptidase M24B family. In terms of assembly, homodimer. Interacts with N-1-naphthylphthalamic acid (NPA). It depends on Mn(2+) as a cofactor. Requires Zn(2+) as cofactor. In terms of processing, glycosylated. Also present in a non-glycosylated form. In terms of tissue distribution, ubiquitous with preferential expression in 5 days-old seedlings, roots, flowers, inflorescences and rosette leaves (at protein levels).

It is found in the cytoplasm. The protein resides in the cell membrane. The protein localises to the microsome membrane. The catalysed reaction is Release of any N-terminal amino acid, including proline, that is linked to proline, even from a dipeptide or tripeptide.. Inhibited by EGTA and apstatin, and, to some extent, by the flavonoid kaempferol. In terms of biological role, catalyzes the removal of a penultimate prolyl residue from the N-termini of peptides, such as Arg-Pro-Pro. Aminopeptidase that binds to the auxin transport inhibitor N-1-naphthylphthalamic acid (NPA). May play a negative role in the regulation of PIN auxin transport proteins. The chain is Aminopeptidase P1 from Arabidopsis thaliana (Mouse-ear cress).